Consider the following 98-residue polypeptide: NADH-ubiquinone oxidoreductase chain 4L (98 aa).

3 helical membrane passes run 1 to 21, 29 to 49, and 61 to 81; these read MPFI…GLLM, SLLC…LLCL, and MILL…LVMV.

Belongs to the complex I subunit 4L family. As to quaternary structure, core subunit of respiratory chain NADH dehydrogenase (Complex I) which is composed of 45 different subunits.

The protein localises to the mitochondrion inner membrane. The enzyme catalyses a ubiquinone + NADH + 5 H(+)(in) = a ubiquinol + NAD(+) + 4 H(+)(out). In terms of biological role, core subunit of the mitochondrial membrane respiratory chain NADH dehydrogenase (Complex I) which catalyzes electron transfer from NADH through the respiratory chain, using ubiquinone as an electron acceptor. Part of the enzyme membrane arm which is embedded in the lipid bilayer and involved in proton translocation. The polypeptide is NADH-ubiquinone oxidoreductase chain 4L (MT-ND4L) (Dugong dugon (Dugong)).